The following is a 250-amino-acid chain: 23S rRNA (guanosine-2'-O-)-methyltransferase RlmB (250 aa).

Residues Gly-197, Ile-217, and Met-226 each coordinate S-adenosyl-L-methionine.

It belongs to the class IV-like SAM-binding methyltransferase superfamily. RNA methyltransferase TrmH family. RlmB subfamily.

It is found in the cytoplasm. It carries out the reaction guanosine(2251) in 23S rRNA + S-adenosyl-L-methionine = 2'-O-methylguanosine(2251) in 23S rRNA + S-adenosyl-L-homocysteine + H(+). In terms of biological role, specifically methylates the ribose of guanosine 2251 in 23S rRNA. This is 23S rRNA (guanosine-2'-O-)-methyltransferase RlmB from Neisseria meningitidis serogroup B (strain ATCC BAA-335 / MC58).